Consider the following 411-residue polypeptide: Na(+)-translocating NADH-quinone reductase subunit F (411 aa).

A helical membrane pass occupies residues 5–25; sequence VILALGIAAFTVIVLVLVAII. Positions 36–130 constitute a 2Fe-2S ferredoxin-type domain; the sequence is GDITIDINDD…NMEVELPEEI (95 aa). [2Fe-2S] cluster contacts are provided by C73, C79, C82, and C114. The region spanning 133-273 is the FAD-binding FR-type domain; the sequence is VKKWECTVIS…SGPFGEFFAK (141 aa). The tract at residues 276 to 393 is catalytic; it reads DAEMVFIGGG…PVMNAAVIKM (118 aa).

This sequence belongs to the NqrF family. In terms of assembly, composed of six subunits; NqrA, NqrB, NqrC, NqrD, NqrE and NqrF. Requires [2Fe-2S] cluster as cofactor. FAD is required as a cofactor.

Its subcellular location is the cell inner membrane. It catalyses the reaction a ubiquinone + n Na(+)(in) + NADH + H(+) = a ubiquinol + n Na(+)(out) + NAD(+). NQR complex catalyzes the reduction of ubiquinone-1 to ubiquinol by two successive reactions, coupled with the transport of Na(+) ions from the cytoplasm to the periplasm. The first step is catalyzed by NqrF, which accepts electrons from NADH and reduces ubiquinone-1 to ubisemiquinone by a one-electron transfer pathway. The polypeptide is Na(+)-translocating NADH-quinone reductase subunit F (Haemophilus influenzae (strain ATCC 51907 / DSM 11121 / KW20 / Rd)).